A 461-amino-acid chain; its full sequence is Cysteine--tRNA ligase (461 aa).

Cys-28 lines the Zn(2+) pocket. Positions Ile-30–His-40 match the 'HIGH' region motif. The Zn(2+) site is built by Cys-209, His-234, and Glu-238. The 'KMSKS' region signature appears at Lys-266–Ser-270. Lys-269 lines the ATP pocket.

This sequence belongs to the class-I aminoacyl-tRNA synthetase family. Monomer. The cofactor is Zn(2+).

It localises to the cytoplasm. It carries out the reaction tRNA(Cys) + L-cysteine + ATP = L-cysteinyl-tRNA(Cys) + AMP + diphosphate. In Klebsiella pneumoniae (strain 342), this protein is Cysteine--tRNA ligase.